A 238-amino-acid polypeptide reads, in one-letter code: Phosphoribosylaminoimidazole-succinocarboxamide synthase (238 aa).

Belongs to the SAICAR synthetase family.

The enzyme catalyses 5-amino-1-(5-phospho-D-ribosyl)imidazole-4-carboxylate + L-aspartate + ATP = (2S)-2-[5-amino-1-(5-phospho-beta-D-ribosyl)imidazole-4-carboxamido]succinate + ADP + phosphate + 2 H(+). It functions in the pathway purine metabolism; IMP biosynthesis via de novo pathway; 5-amino-1-(5-phospho-D-ribosyl)imidazole-4-carboxamide from 5-amino-1-(5-phospho-D-ribosyl)imidazole-4-carboxylate: step 1/2. This chain is Phosphoribosylaminoimidazole-succinocarboxamide synthase, found in Methanococcoides burtonii (strain DSM 6242 / NBRC 107633 / OCM 468 / ACE-M).